The sequence spans 440 residues: Chromosomal replication initiator protein DnaA (440 aa).

The domain I, interacts with DnaA modulators stretch occupies residues Met-1–Glu-93. A domain II region spans residues Tyr-94–Ser-101. Residues Phe-102–Ser-318 form a domain III, AAA+ region region. Residues Gly-146, Gly-148, Lys-149, and Thr-150 each contribute to the ATP site. The tract at residues Thr-319–Gly-440 is domain IV, binds dsDNA.

It belongs to the DnaA family. In terms of assembly, oligomerizes as a right-handed, spiral filament on DNA at oriC.

It is found in the cytoplasm. In terms of biological role, plays an essential role in the initiation and regulation of chromosomal replication. ATP-DnaA binds to the origin of replication (oriC) to initiate formation of the DNA replication initiation complex once per cell cycle. Binds the DnaA box (a 9 base pair repeat at the origin) and separates the double-stranded (ds)DNA. Forms a right-handed helical filament on oriC DNA; dsDNA binds to the exterior of the filament while single-stranded (ss)DNA is stabiized in the filament's interior. The ATP-DnaA-oriC complex binds and stabilizes one strand of the AT-rich DNA unwinding element (DUE), permitting loading of DNA polymerase. After initiation quickly degrades to an ADP-DnaA complex that is not apt for DNA replication. Binds acidic phospholipids. This chain is Chromosomal replication initiator protein DnaA, found in Ruminiclostridium cellulolyticum (strain ATCC 35319 / DSM 5812 / JCM 6584 / H10) (Clostridium cellulolyticum).